The primary structure comprises 132 residues: Fatty acid-binding protein, brain (132 aa).

V2 bears the N-acetylvaline mark. A fatty acid is bound at residue 127 to 129 (RCY).

It belongs to the calycin superfamily. Fatty-acid binding protein (FABP) family. Expressed in brain and other neural tissues.

It is found in the cytoplasm. Functionally, B-FABP could be involved in the transport of a so far unknown hydrophobic ligand with potential morphogenic activity during CNS development. It is required for the establishment of the radial glial fiber system in developing brain, a system that is necessary for the migration of immature neurons to establish cortical layers. In Mus musculus (Mouse), this protein is Fatty acid-binding protein, brain (Fabp7).